Here is a 229-residue protein sequence, read N- to C-terminus: Large ribosomal subunit protein uL1 (229 aa).

Belongs to the universal ribosomal protein uL1 family. As to quaternary structure, part of the 50S ribosomal subunit.

In terms of biological role, binds directly to 23S rRNA. The L1 stalk is quite mobile in the ribosome, and is involved in E site tRNA release. Protein L1 is also a translational repressor protein, it controls the translation of the L11 operon by binding to its mRNA. The protein is Large ribosomal subunit protein uL1 of Phytoplasma australiense.